The following is a 536-amino-acid chain: DNA damage-binding protein CMR1 (536 aa).

Basic and acidic residues predominate over residues 36 to 45; that stretch reads REAGVDDTHR. Residues 36 to 72 form a disordered region; it reads REAGVDDTHRTVVKKKKSPSVSRGRSASPKVAPVATR. WD repeat units lie at residues 195-236, 251-291, 346-386, 403-442, 456-495, and 496-535; these read LVYE…LSEN, FFTK…SNDI, LSDK…KKPE, DSRL…LPDD, GRWT…LAHL, and PTAT…KEEE.

Belongs to the WD repeat DDB2/WDR76 family.

Its function is as follows. DNA-binding protein that binds to both single- and double-stranded DNA. Binds preferentially to UV-damaged DNA. May be involved in DNA-metabolic processes. The sequence is that of DNA damage-binding protein CMR1 from Vanderwaltozyma polyspora (strain ATCC 22028 / DSM 70294 / BCRC 21397 / CBS 2163 / NBRC 10782 / NRRL Y-8283 / UCD 57-17) (Kluyveromyces polysporus).